The sequence spans 118 residues: Large ribosomal subunit protein bL20 (118 aa).

Belongs to the bacterial ribosomal protein bL20 family.

Binds directly to 23S ribosomal RNA and is necessary for the in vitro assembly process of the 50S ribosomal subunit. It is not involved in the protein synthesizing functions of that subunit. This chain is Large ribosomal subunit protein bL20, found in Bacillus anthracis (strain CDC 684 / NRRL 3495).